A 231-amino-acid chain; its full sequence is Large ribosomal subunit protein uL1 (231 aa).

Belongs to the universal ribosomal protein uL1 family. In terms of assembly, part of the 50S ribosomal subunit.

Binds directly to 23S rRNA. The L1 stalk is quite mobile in the ribosome, and is involved in E site tRNA release. Functionally, protein L1 is also a translational repressor protein, it controls the translation of the L11 operon by binding to its mRNA. This chain is Large ribosomal subunit protein uL1, found in Macrococcus caseolyticus (strain JCSC5402) (Macrococcoides caseolyticum).